The following is a 98-amino-acid chain: ESAT-6-like protein EsxK (98 aa).

Belongs to the WXG100 family. CFP-10 subfamily. Strongly interacts with EsxL to form a heterodimeric complex under reducing conditions. The complex is regulated by the redox state of EsxL.

The protein resides in the secreted. The chain is ESAT-6-like protein EsxK from Mycobacterium tuberculosis (strain ATCC 25618 / H37Rv).